Here is a 312-residue protein sequence, read N- to C-terminus: Putative tricarboxylate transport protein, mitochondrial (312 aa).

Solcar repeat units lie at residues Glu-23–Gln-111, Val-122–Trp-208, and Ile-218–Phe-303. The next 6 membrane-spanning stretches (helical) occupy residues Ile-29–Val-49, Val-75–Ile-95, Leu-126–Val-146, Phe-164–Val-184, Pro-221–Ile-241, and Val-286–Val-306.

This sequence belongs to the mitochondrial carrier (TC 2.A.29) family.

The protein resides in the mitochondrion inner membrane. In terms of biological role, transport of citrate across inner mitochondrial membrane. The chain is Putative tricarboxylate transport protein, mitochondrial from Caenorhabditis elegans.